Here is an 810-residue protein sequence, read N- to C-terminus: Protein 4.1 (810 aa).

Positions Met1–Asp124 are disordered. Ser14 carries the phosphoserine modification. At Thr61 the chain carries Phosphothreonine. Over residues Pro62–Glu76 the composition is skewed to basic and acidic residues. 10 positions are modified to phosphoserine: Ser85, Ser86, Ser96, Ser105, Ser122, Ser150, Ser152, Ser153, Ser189, and Ser192. The segment covering Asp102–Glu118 has biased composition (basic and acidic residues). A disordered region spans residues Ser152–Lys203. The span at Gln160–Ala200 shows a compositional bias: basic and acidic residues. Residues Met211–Ser492 enclose the FERM domain. The residue at position 223 (Tyr223) is a Phosphotyrosine. Thr379 carries the post-translational modification Phosphothreonine. Residues Thr518–Val613 are disordered. Phosphoserine occurs at positions 522, 541, 543, and 555. Basic and acidic residues predominate over residues Ala587–Gly601. The interval Lys615–Pro659 is spectrin--actin-binding. Phosphoserine is present on residues Ser620, Ser630, Ser655, and Ser658. Residues Phe660 to Glu810 form a C-terminal (CTD) region. Thr682 and Thr805 each carry phosphothreonine.

Binds with a high affinity to glycophorin and with lower affinity to band III protein. Associates with the nuclear mitotic apparatus. Binds calmodulin, CPAP and DLG1. Also found to associate with contractile apparatus and tight junctions. Interacts with NUMA1; this interaction is negatively regulated by CDK1 during metaphase and promotes for anaphase-specific localization of NUMA1 in symmetrically dividing cells. Interacts with ATP2B1; regulates small intestinal calcium absorption through regulation of membrane expression of ATP2B1. O-glycosylated; contains N-acetylglucosamine side chains in the C-terminal domain. Post-translationally, phosphorylated at multiple sites by different protein kinases and each phosphorylation event selectively modulates the protein's functions.

Its subcellular location is the nucleus. The protein resides in the cytoplasm. It localises to the cytoskeleton. The protein localises to the cell cortex. Its function is as follows. Protein 4.1 is a major structural element of the erythrocyte membrane skeleton. It plays a key role in regulating membrane physical properties of mechanical stability and deformability by stabilizing spectrin-actin interaction. Recruits DLG1 to membranes. Required for dynein-dynactin complex and NUMA1 recruitment at the mitotic cell cortex during anaphase. The polypeptide is Protein 4.1 (Canis lupus familiaris (Dog)).